Consider the following 194-residue polypeptide: dATP triphosphohydrolase (194 aa).

R17 is a dATP binding site. H32, H71, D72, E75, D80, and D123 together coordinate Co(2+).

This sequence belongs to the Caudovirales dATP triphosphohydrolase family. The cofactor is Co(2+).

It carries out the reaction dATP + H2O = 2'-deoxyadenosine + triphosphate + H(+). The catalysed reaction is dADP + H2O = 2'-deoxyadenosine + diphosphate. The enzyme catalyses dAMP + H2O = 2'-deoxyadenosine + phosphate. Functionally, catalyzes the hydrolysis of dATP, dADP and dAMP into dA. This step is essential for Z-genome synthesis (containing aminoadenine instead of adenine). Specifically removes dATP and its precursor dADP from the nucleotide pool of the host, preventing the incorporation of A into the phage genome and favoring the integration of the Z-base into the viral genome. This is dATP triphosphohydrolase (datZ) from Salmonella phage PMBT28.